Here is a 173-residue protein sequence, read N- to C-terminus: MIEKREFYSKEDLIASSRGELFGERGPQLPAHQMLMMDQVVKITKYGGHYNKGFMEAELDIKPDMWFFCCHFIGDPVMPGCLGLDAMWQLVGFYLGWIGGKGKGRALGVGEVKFIGQILPSAKKVTYRIHFRRIIHRQLLMGMADGEVICDGKIIYTATDLKVGLFQDPTILS.

Histidine 71 is a catalytic residue.

Belongs to the thioester dehydratase family. FabA subfamily. Homodimer.

It localises to the cytoplasm. The enzyme catalyses a (3R)-hydroxyacyl-[ACP] = a (2E)-enoyl-[ACP] + H2O. The catalysed reaction is (3R)-hydroxydecanoyl-[ACP] = (2E)-decenoyl-[ACP] + H2O. It catalyses the reaction (2E)-decenoyl-[ACP] = (3Z)-decenoyl-[ACP]. The protein operates within lipid metabolism; fatty acid biosynthesis. Its function is as follows. Necessary for the introduction of cis unsaturation into fatty acids. Catalyzes the dehydration of (3R)-3-hydroxydecanoyl-ACP to E-(2)-decenoyl-ACP and then its isomerization to Z-(3)-decenoyl-ACP. Can catalyze the dehydratase reaction for beta-hydroxyacyl-ACPs with saturated chain lengths up to 16:0, being most active on intermediate chain length. In Baumannia cicadellinicola subsp. Homalodisca coagulata, this protein is 3-hydroxydecanoyl-[acyl-carrier-protein] dehydratase.